A 185-amino-acid chain; its full sequence is Gastrokine-1 (185 aa).

An N-terminal signal peptide occupies residues 1 to 20; the sequence is MKFTIAFAGLLGVFLTPALA. The 97-residue stretch at 54-150 folds into the BRICHOS domain; it reads NNGWNSWNAL…MCKGIPTYMA (97 aa). Cys81 and Cys142 form a disulfide bridge.

This sequence belongs to the gastrokine family. In terms of tissue distribution, highly expressed specifically in surface cells of the antrum mucosa from where it is secreted.

It localises to the secreted. The protein localises to the cytoplasmic granule. It is found in the golgi apparatus. Functionally, has mitogenic activity and may be involved in maintaining the integrity of the gastric mucosal epithelium. In Sus scrofa (Pig), this protein is Gastrokine-1 (GKN1).